The chain runs to 246 residues: Dihydroorotate dehydrogenase B (NAD(+)), electron transfer subunit (246 aa).

Residues Met3–Ile95 form the FAD-binding FR-type domain. Residues Arg48 to Ser51 and Gly70 to Thr71 each bind FAD. Residues Cys213, Cys218, Cys221, and Cys233 each contribute to the [2Fe-2S] cluster site.

It belongs to the PyrK family. In terms of assembly, heterotetramer of 2 PyrK and 2 PyrD type B subunits. [2Fe-2S] cluster serves as cofactor. The cofactor is FAD.

It participates in pyrimidine metabolism; UMP biosynthesis via de novo pathway; orotate from (S)-dihydroorotate (NAD(+) route): step 1/1. Functionally, responsible for channeling the electrons from the oxidation of dihydroorotate from the FMN redox center in the PyrD type B subunit to the ultimate electron acceptor NAD(+). This chain is Dihydroorotate dehydrogenase B (NAD(+)), electron transfer subunit, found in Clostridium perfringens (strain 13 / Type A).